An 882-amino-acid chain; its full sequence is Probable LRR receptor-like serine/threonine-protein kinase At1g12460 (882 aa).

Positions 1–21 (MRKVHLFLVLVHFIYISTSRS) are cleaved as a signal peptide. Over 22 to 515 (DSISERDILL…SRNSDALSIS (494 aa)) the chain is Extracellular. Asn76 carries an N-linked (GlcNAc...) asparagine glycan. LRR repeat units follow at residues 92 to 113 (FIRV…DYFK), 116 to 138 (TLWT…ISEL), 140 to 162 (SLRF…LFKF), 165 to 187 (KTKF…IVNC), 189 to 210 (NLVG…RICD), 213 to 235 (VLEY…IQKC), 237 to 258 (RLIL…AVLT), 261 to 283 (NITY…VDCS), 285 to 308 (SLEF…MGCK), 309 to 331 (SLKL…IGKM), 333 to 355 (SLSV…IGSL), 357 to 379 (FLQV…ISNC), 381 to 404 (VLLE…LNLT), 405 to 427 (NIKI…LGNL), 429 to 451 (KVQF…LGSL), and 453 to 475 (TLTH…PMIQ). A glycan (N-linked (GlcNAc...) asparagine) is linked at Asn121. N-linked (GlcNAc...) asparagine glycosylation is found at Asn261 and Asn266. Asn321 and Asn341 each carry an N-linked (GlcNAc...) asparagine glycan. 3 N-linked (GlcNAc...) asparagine glycosylation sites follow: Asn402, Asn417, and Asn426. Asn458 and Asn463 each carry an N-linked (GlcNAc...) asparagine glycan. Residues 516 to 536 (VIIVIIAAAVILFGVCIVLAL) traverse the membrane as a helical segment. Residues 537–882 (NLRARKRRKD…LESIRNGFGS (346 aa)) lie on the Cytoplasmic side of the membrane. A Phosphothreonine modification is found at Thr589. The 284-residue stretch at 593-876 (LDKENIIGMG…AEVVQVLESI (284 aa)) folds into the Protein kinase domain. ATP-binding positions include 599-607 (IGMGSIGSV) and Lys621. Phosphotyrosine is present on Tyr770.

Belongs to the protein kinase superfamily. Ser/Thr protein kinase family.

The protein resides in the cell membrane. The enzyme catalyses L-seryl-[protein] + ATP = O-phospho-L-seryl-[protein] + ADP + H(+). The catalysed reaction is L-threonyl-[protein] + ATP = O-phospho-L-threonyl-[protein] + ADP + H(+). The polypeptide is Probable LRR receptor-like serine/threonine-protein kinase At1g12460 (Arabidopsis thaliana (Mouse-ear cress)).